The sequence spans 348 residues: 4-hydroxy-2-oxovalerate aldolase 2 (348 aa).

The 252-residue stretch at Leu-5–Leu-256 folds into the Pyruvate carboxyltransferase domain. Arg-13–Asp-14 is a binding site for substrate. Asp-14 contacts Mn(2+). The Proton acceptor role is filled by His-17. Substrate-binding residues include Ser-168 and His-195. Residues His-195 and His-197 each contribute to the Mn(2+) site.

The protein belongs to the 4-hydroxy-2-oxovalerate aldolase family.

The catalysed reaction is (S)-4-hydroxy-2-oxopentanoate = acetaldehyde + pyruvate. The polypeptide is 4-hydroxy-2-oxovalerate aldolase 2 (Salinispora arenicola (strain CNS-205)).